Reading from the N-terminus, the 580-residue chain is Kelch-like protein 38 (580 aa).

One can recognise a BTB domain in the interval 34–101 (TDVSICSGAC…VYTGEVHISA (68 aa)). Positions 136-237 (CLGLVRLAEI…HPAFFHHFIA (102 aa)) constitute a BACK domain. Kelch repeat units follow at residues 284–331 (FLLL…TLHR), 333–382 (VYVL…THRN), 383–430 (FIFS…VKDQ), 432–478 (LYLF…VLGE), 479–520 (KIII…VMGN), and 522–572 (LYVT…TLQC).

The chain is Kelch-like protein 38 (Klhl38) from Rattus norvegicus (Rat).